A 421-amino-acid polypeptide reads, in one-letter code: ATP-dependent RNA helicase RhlB (421 aa).

Positions 9 to 37 (QKFSDFALHPKVVEALEKKGFHNCTPIQA) match the Q motif motif. A Helicase ATP-binding domain is found at 40 to 219 (LPLTLAGRDV…FEQMNNAEYI (180 aa)). 53-60 (AQTGTGKT) lines the ATP pocket. The short motif at 165–168 (DEAD) is the DEAD box element. In terms of domain architecture, Helicase C-terminal spans 245 to 390 (RLLQTLIEEE…VSKYNPDALM (146 aa)). The segment at 392-421 (DLPKPLRLTRPRTGNGPRRTGAPRNRRRSG) is disordered. Residues 402-414 (PRTGNGPRRTGAP) are compositionally biased toward low complexity.

The protein belongs to the DEAD box helicase family. RhlB subfamily. Component of the RNA degradosome, which is a multiprotein complex involved in RNA processing and mRNA degradation.

It localises to the cytoplasm. It carries out the reaction ATP + H2O = ADP + phosphate + H(+). Its function is as follows. DEAD-box RNA helicase involved in RNA degradation. Has RNA-dependent ATPase activity and unwinds double-stranded RNA. In Escherichia coli O157:H7 (strain EC4115 / EHEC), this protein is ATP-dependent RNA helicase RhlB.